The chain runs to 417 residues: Tyrosine--tRNA ligase (417 aa).

Residue tyrosine 34 coordinates L-tyrosine. The short motif at 39–48 is the 'HIGH' region element; it reads PSGDSLHIGH. 2 residues coordinate L-tyrosine: tyrosine 165 and glutamine 169. The 'KMSKS' region signature appears at 227–231; the sequence is KFGKT. Lysine 230 provides a ligand contact to ATP. One can recognise an S4 RNA-binding domain in the interval 349–415; the sequence is ANIVDWLVDT…GKKNYTLAKV (67 aa).

The protein belongs to the class-I aminoacyl-tRNA synthetase family. TyrS type 1 subfamily. As to quaternary structure, homodimer.

The protein localises to the cytoplasm. The enzyme catalyses tRNA(Tyr) + L-tyrosine + ATP = L-tyrosyl-tRNA(Tyr) + AMP + diphosphate + H(+). Catalyzes the attachment of tyrosine to tRNA(Tyr) in a two-step reaction: tyrosine is first activated by ATP to form Tyr-AMP and then transferred to the acceptor end of tRNA(Tyr). This Limosilactobacillus fermentum (strain NBRC 3956 / LMG 18251) (Lactobacillus fermentum) protein is Tyrosine--tRNA ligase.